The following is a 175-amino-acid chain: MDIAIHHPWIRRPFFPFHSPSRLFDQFFGEHLLESDLFPASTSLSPFYLRPPSFLRAPSWIDTGLSEMRLEKDRFSVNLDVKHFSPEELKVKVLGDVIEVHGKHEERQDEHGFISREFHRKYRIPADVDPLAITSSLSSDGVLTVNGPRKQASGPERTIPITREEKPAVTAAPKK.

M1 carries the N-acetylmethionine modification. At S19 the chain carries Phosphoserine. O-linked (GlcNAc) serine glycosylation occurs at S41. S45 and S59 each carry phosphoserine. Positions 56 to 164 (RAPSWIDTGL…PERTIPITRE (109 aa)) constitute a sHSP domain. H83 contributes to the Zn(2+) binding site. K90 is a glycosylation site (N-linked (Glc) (glycation) lysine). At K92 the chain carries N6-acetyllysine; alternate. Residue K92 is glycosylated (N-linked (Glc) (glycation) lysine; alternate). The Zn(2+) site is built by H104, E106, H111, and H119. Residues 144 to 175 (TVNGPRKQASGPERTIPITREEKPAVTAAPKK) are disordered. K166 carries the N6-acetyllysine modification. O-linked (GlcNAc) threonine glycosylation occurs at T170.

It belongs to the small heat shock protein (HSP20) family. As to quaternary structure, heteromer composed of three CRYAA and one CRYAB subunits. Aggregates with homologous proteins, including the small heat shock protein HSPB1, to form large heteromeric complexes. Inter-subunit bridging via zinc ions enhances stability, which is crucial as there is no protein turn over in the lens. Interacts with HSPBAP1 and TTN/titin. Interacts with TMEM109; in the cellular response to DNA damage. Interacts with DES; binds rapidly during early stages of DES filament assembly and a reduced binding seen in the later stages. Interacts with TMED10; the interaction mediates the translocation from the cytoplasm into the ERGIC (endoplasmic reticulum-Golgi intermediate compartment) and thereby secretion. Interacts with ATP6V1A and with MTOR, forming a ternary complex. It is not known whether either Lys-90, or Lys-92, or both are glycated. In terms of tissue distribution, lens as well as other tissues.

Its subcellular location is the cytoplasm. The protein resides in the nucleus. It localises to the secreted. The protein localises to the lysosome. Its function is as follows. May contribute to the transparency and refractive index of the lens. Has chaperone-like activity, preventing aggregation of various proteins under a wide range of stress conditions. In lens epithelial cells, stabilizes the ATP6V1A protein, preventing its degradation by the proteasome. This is Alpha-crystallin B chain (CRYAB) from Bos taurus (Bovine).